Reading from the N-terminus, the 1252-residue chain is Fanconi anemia group J protein homolog (1252 aa).

In terms of domain architecture, Helicase ATP-binding spans 11–452; that stretch reads GGVKIMFPCK…KDHEQLRAMC (442 aa). A Nuclear localization signal motif is present at residues 164 to 181; it reads RKRIRPLETEQQVRKRHC. An ATP-binding site is contributed by 191-198; that stretch reads ALEVYNQR. Positions 292, 308, 320, and 360 each coordinate [4Fe-4S] cluster. The DEAH box motif lies at 403–406; the sequence is DEAH. 2 disordered regions span residues 919–1008 and 1212–1252; these read SKEP…DRTN and TNGE…STST. Composition is skewed to polar residues over residues 920–930 and 952–969; these read KEPSSASQQEA and HLTT…NQPG. The span at 989–1008 shows a compositional bias: basic and acidic residues; sequence MDSTPRRPANKTEKKSDRTN. The segment covering 1215–1224 has biased composition (acidic residues); the sequence is EEAEQVESQE. Residues 1228 to 1239 show a composition bias toward basic residues; the sequence is KKRKISLSRSRN.

The protein belongs to the DEAD box helicase family. DEAH subfamily. It depends on [4Fe-4S] cluster as a cofactor.

Its subcellular location is the nucleus. The catalysed reaction is Couples ATP hydrolysis with the unwinding of duplex DNA at the replication fork by translocating in the 5'-3' direction. This creates two antiparallel DNA single strands (ssDNA). The leading ssDNA polymer is the template for DNA polymerase III holoenzyme which synthesizes a continuous strand.. The enzyme catalyses ATP + H2O = ADP + phosphate + H(+). DNA-dependent helicase and 5' to 3' DNA helicase required for the maintenance of chromosomal stability. Involved in the repair of DNA double-strand breaks by homologous recombination. Involved in the repair of abasic sites at replication forks by promoting the degradation of DNA-protein cross-links: acts by catalyzing unfolding of HMCES DNA-protein cross-link via its helicase activity, exposing the underlying DNA and enabling cleavage of the DNA-protein adduct by the SPRTN metalloprotease. The chain is Fanconi anemia group J protein homolog (BRIP1) from Gallus gallus (Chicken).